The sequence spans 22 residues: Mu-conotoxin TIIIA (22 aa).

3 cysteine pairs are disulfide-bonded: C4–C16, C5–C21, and C11–C22. 4-hydroxyproline is present on residues P8 and P18. C22 is modified (cysteine amide).

It belongs to the conotoxin M superfamily. Expressed by the venom duct.

It localises to the secreted. In terms of biological role, mu-conotoxins block voltage-gated sodium channels (Nav). This synthetic toxin reversibly and potently blocks rNav1.4/SCN4A (IC(50) is 9 nM) and rNav1.2/SCN2A (IC(50) is 40 nM). It also moderately blocks rNav1.1/SCN1A, rNav1.3/SCN3A, and rNav1.6/SCN8A. The block of SCN1A and SCN2A is modified when beta-subunits are coexpressed with alpha subunits. Hence, blocks of channels containing beta-1 and beta-3 subunits are more potent (compared to channels without beta subunits), whereas blocks of channels containing beta-2 and beta-4 subunits are less potent (compared to channels without beta subunits). The chain is Mu-conotoxin TIIIA from Conus tulipa (Fish-hunting cone snail).